We begin with the raw amino-acid sequence, 372 residues long: Rab9 effector protein with kelch motifs (372 aa).

Kelch repeat units lie at residues 49–95 (KVFI…FIPS), 100–146 (RIWV…TSSA), 151–200 (QLYV…VMVA), 204–250 (KLFI…SAVA), and 254–303 (HVYI…IIPW). Position 133 is a phosphoserine (Ser133). Residues 314-340 (SNSLTLNHEAEKEDSADKVMSHSGDSH) form a disordered region. The span at 321–340 (HEAEKEDSADKVMSHSGDSH) shows a compositional bias: basic and acidic residues.

In terms of assembly, interacts with PIKFYVE; the interaction recruits RABEPK to the endosomal membrane. Interacts with RAB9 in its GTP-bound conformation. Phosphorylated on Ser residues by PIKFYVE.

It localises to the cytoplasm. Its subcellular location is the endosome membrane. Functionally, rab9 effector required for endosome to trans-Golgi network (TGN) transport. In Homo sapiens (Human), this protein is Rab9 effector protein with kelch motifs.